Here is a 432-residue protein sequence, read N- to C-terminus: Serine--tRNA ligase (432 aa).

237–239 (TSE) contacts L-serine. 268–270 (RSE) is an ATP binding site. Residue glutamate 291 participates in L-serine binding. 355–358 (EISS) contacts ATP. Serine 390 contacts L-serine.

It belongs to the class-II aminoacyl-tRNA synthetase family. Type-1 seryl-tRNA synthetase subfamily. In terms of assembly, homodimer. The tRNA molecule binds across the dimer.

It localises to the cytoplasm. The enzyme catalyses tRNA(Ser) + L-serine + ATP = L-seryl-tRNA(Ser) + AMP + diphosphate + H(+). It catalyses the reaction tRNA(Sec) + L-serine + ATP = L-seryl-tRNA(Sec) + AMP + diphosphate + H(+). Its pathway is aminoacyl-tRNA biosynthesis; selenocysteinyl-tRNA(Sec) biosynthesis; L-seryl-tRNA(Sec) from L-serine and tRNA(Sec): step 1/1. In terms of biological role, catalyzes the attachment of serine to tRNA(Ser). Is also able to aminoacylate tRNA(Sec) with serine, to form the misacylated tRNA L-seryl-tRNA(Sec), which will be further converted into selenocysteinyl-tRNA(Sec). The sequence is that of Serine--tRNA ligase from Methylobacillus flagellatus (strain ATCC 51484 / DSM 6875 / VKM B-1610 / KT).